A 586-amino-acid polypeptide reads, in one-letter code: Pyruvate kinase (586 aa).

A substrate-binding site is contributed by Arg32. Residues Asn34, Ser36, Asp66, and Thr67 each contribute to the K(+) site. ATP is bound at residue 34–37 (NFSH). Residues Arg73 and Lys156 each coordinate ATP. Mg(2+) is bound at residue Glu222. Positions 245, 246, and 278 each coordinate substrate. Asp246 lines the Mg(2+) pocket.

Belongs to the pyruvate kinase family. It in the C-terminal section; belongs to the PEP-utilizing enzyme family. Homotetramer. Requires Mg(2+) as cofactor. K(+) is required as a cofactor.

The enzyme catalyses pyruvate + ATP = phosphoenolpyruvate + ADP + H(+). It functions in the pathway carbohydrate degradation; glycolysis; pyruvate from D-glyceraldehyde 3-phosphate: step 5/5. This Sporosarcina psychrophila (Bacillus psychrophilus) protein is Pyruvate kinase (pyk).